The primary structure comprises 246 residues: Probable transcriptional regulatory protein HS_0508 (246 aa).

It belongs to the TACO1 family.

Its subcellular location is the cytoplasm. This chain is Probable transcriptional regulatory protein HS_0508, found in Histophilus somni (strain 129Pt) (Haemophilus somnus).